Reading from the N-terminus, the 426-residue chain is Ankyrin repeat-containing protein BDA1 (426 aa).

ANK repeat units follow at residues 1-29 (MDSK…DILQ), 36-65 (IIHT…SFAK), 70-99 (YGLS…SLVR), 104-134 (GGMT…SIKD), 138-167 (NGET…KMRD), and 182-212 (GGNT…DRNI). Transmembrane regions (helical) follow at residues 288-308 (ALLV…AQLL), 329-349 (WGCN…LLPV), 355-375 (WWYF…MYMM), and 380-400 (FFFL…VLYV).

It is found in the cell membrane. Involved in plant defense. Required for basal resistance against Pseudomonas syringae pv. tomato DC3000. Required for resistance against nonpathogenic bacteria. May be involved in signaling components that function downstream of SNC2 and upstream of NPR1 and WRKY70 to regulate defense responses. This is Ankyrin repeat-containing protein BDA1 from Arabidopsis thaliana (Mouse-ear cress).